The sequence spans 420 residues: MKWLVILGLVALSDCLVMIPLTKVKSVRESLREKGLLKNFLKEHPYNMIQNLLSKNSSHVQKFSYQPLRNYLDMVYVGNISIGTPPQQFSVVFDTGSSDLWVPSIYCKSKACVTHRSFNPSHSSTFHDRGKSIKLEYGSGKMSGFLGQDTVRIGQLTSTGQAFGLSKEETGKAFEHAIFDGILGLAYPSIAIKGTTTVIDNLKKQDQISEPVFAFYLSSDKEEGSVVMFGGVDKKYYKGDLKWVPLTQTSYWQIALDRITCRGRVIGCPRGCQAIVDTGTSMLHGPSKAVAKIHSLIKHFEKEYVVPCNARKALPDIVFTINNVDYPVPAQAYIRKYVVPCNARKALPDIVFTINNVDYPVPAQAYIRKNANNNRCYSTFEDIMDTLNQREIWILGDVFLRLYFTVYDEGQNRIGLAQAT.

The signal sequence occupies residues 1–15 (MKWLVILGLVALSDC). 2 N-linked (GlcNAc...) asparagine glycosylation sites follow: asparagine 56 and asparagine 79. Residues 76–417 (YVGNISIGTP…DEGQNRIGLA (342 aa)) form the Peptidase A1 domain. Residue aspartate 94 is part of the active site. 2 cysteine pairs are disulfide-bonded: cysteine 107–cysteine 112 and cysteine 268–cysteine 272. Aspartate 277 is an active-site residue. A disulfide bridge connects residues cysteine 341 and cysteine 376.

The protein belongs to the peptidase A1 family. In terms of tissue distribution, expressed throughout the chorion, with the signal localized exclusively over the trophectoderm.

The protein localises to the secreted. The protein resides in the extracellular space. This chain is Pregnancy-associated glycoprotein 2 (PAG2), found in Sus scrofa (Pig).